Consider the following 754-residue polypeptide: 5-methyltetrahydropteroyltriglutamate--homocysteine methyltransferase (754 aa).

Residues 17 to 20 (RELK) and Lys117 contribute to the 5-methyltetrahydropteroyltri-L-glutamate site. L-homocysteine is bound by residues 431 to 433 (IGS) and Glu484. Residues 431 to 433 (IGS) and Glu484 each bind L-methionine. 5-methyltetrahydropteroyltri-L-glutamate contacts are provided by residues 515–516 (RC) and Trp561. Asp599 contacts L-homocysteine. Asp599 provides a ligand contact to L-methionine. A 5-methyltetrahydropteroyltri-L-glutamate-binding site is contributed by Glu605. The Zn(2+) site is built by His641, Cys643, and Glu665. His694 acts as the Proton donor in catalysis. Cys726 contacts Zn(2+).

It belongs to the vitamin-B12 independent methionine synthase family. The cofactor is Zn(2+).

It catalyses the reaction 5-methyltetrahydropteroyltri-L-glutamate + L-homocysteine = tetrahydropteroyltri-L-glutamate + L-methionine. It participates in amino-acid biosynthesis; L-methionine biosynthesis via de novo pathway; L-methionine from L-homocysteine (MetE route): step 1/1. In terms of biological role, catalyzes the transfer of a methyl group from 5-methyltetrahydrofolate to homocysteine resulting in methionine formation. The polypeptide is 5-methyltetrahydropteroyltriglutamate--homocysteine methyltransferase (Salmonella typhimurium (strain LT2 / SGSC1412 / ATCC 700720)).